A 90-amino-acid chain; its full sequence is DNA-binding protein HU-beta (90 aa).

The protein belongs to the bacterial histone-like protein family. As to quaternary structure, heterodimer of an alpha and a beta chain.

In terms of biological role, histone-like DNA-binding protein which is capable of wrapping DNA to stabilize it, and thus to prevent its denaturation under extreme environmental conditions. The protein is DNA-binding protein HU-beta (hupB) of Pseudomonas aeruginosa (strain ATCC 15692 / DSM 22644 / CIP 104116 / JCM 14847 / LMG 12228 / 1C / PRS 101 / PAO1).